We begin with the raw amino-acid sequence, 424 residues long: N-succinylarginine dihydrolase (424 aa).

Substrate contacts are provided by residues 19 to 28 (AGLSRGNVAS), Asn110, and 137 to 138 (HR). The active site involves Glu174. Arg206 contacts substrate. Residue His242 is part of the active site. The substrate site is built by Asp244 and Asn351. The active-site Nucleophile is the Cys357.

This sequence belongs to the succinylarginine dihydrolase family. In terms of assembly, homodimer.

The catalysed reaction is N(2)-succinyl-L-arginine + 2 H2O + 2 H(+) = N(2)-succinyl-L-ornithine + 2 NH4(+) + CO2. It functions in the pathway amino-acid degradation; L-arginine degradation via AST pathway; L-glutamate and succinate from L-arginine: step 2/5. Its function is as follows. Catalyzes the hydrolysis of N(2)-succinylarginine into N(2)-succinylornithine, ammonia and CO(2). The polypeptide is N-succinylarginine dihydrolase (Zymomonas mobilis subsp. mobilis (strain ATCC 31821 / ZM4 / CP4)).